We begin with the raw amino-acid sequence, 175 residues long: Peptide deformylase 1 (175 aa).

Residues C99 and H141 each contribute to the Fe cation site. Residue E142 is part of the active site. H145 is a binding site for Fe cation.

It belongs to the polypeptide deformylase family. Requires Fe(2+) as cofactor.

It catalyses the reaction N-terminal N-formyl-L-methionyl-[peptide] + H2O = N-terminal L-methionyl-[peptide] + formate. In terms of biological role, removes the formyl group from the N-terminal Met of newly synthesized proteins. Requires at least a dipeptide for an efficient rate of reaction. N-terminal L-methionine is a prerequisite for activity but the enzyme has broad specificity at other positions. This Rickettsia conorii (strain ATCC VR-613 / Malish 7) protein is Peptide deformylase 1.